The sequence spans 376 residues: Anhydro-N-acetylmuramic acid kinase (376 aa).

Residue 22–29 (GTSMDGAD) coordinates ATP.

Belongs to the anhydro-N-acetylmuramic acid kinase family.

The enzyme catalyses 1,6-anhydro-N-acetyl-beta-muramate + ATP + H2O = N-acetyl-D-muramate 6-phosphate + ADP + H(+). It functions in the pathway amino-sugar metabolism; 1,6-anhydro-N-acetylmuramate degradation. The protein operates within cell wall biogenesis; peptidoglycan recycling. Its function is as follows. Catalyzes the specific phosphorylation of 1,6-anhydro-N-acetylmuramic acid (anhMurNAc) with the simultaneous cleavage of the 1,6-anhydro ring, generating MurNAc-6-P. Is required for the utilization of anhMurNAc either imported from the medium or derived from its own cell wall murein, and thus plays a role in cell wall recycling. The chain is Anhydro-N-acetylmuramic acid kinase from Neisseria gonorrhoeae (strain NCCP11945).